The following is a 263-amino-acid chain: 4-hydroxy-2-oxo-heptane-1,7-dioate aldolase (263 aa).

His45 acts as the Proton acceptor in catalysis. Gln147 lines the substrate pocket. Position 149 (Glu149) interacts with a divalent metal cation. Substrate-binding residues include Ala174 and Asp175. Position 175 (Asp175) interacts with a divalent metal cation.

It belongs to the HpcH/HpaI aldolase family. In terms of assembly, homohexamer; trimer of dimers. A divalent metal cation is required as a cofactor.

It catalyses the reaction 4-hydroxy-2-oxoheptanedioate = succinate semialdehyde + pyruvate. The protein operates within aromatic compound metabolism; 4-hydroxyphenylacetate degradation; pyruvate and succinate semialdehyde from 4-hydroxyphenylacetate: step 7/7. Functionally, catalyzes the reversible retro-aldol cleavage of 4-hydroxy-2-ketoheptane-1,7-dioate (HKHD) to pyruvate and succinic semialdehyde. The chain is 4-hydroxy-2-oxo-heptane-1,7-dioate aldolase from Salmonella arizonae (strain ATCC BAA-731 / CDC346-86 / RSK2980).